The chain runs to 512 residues: 2-isopropylmalate synthase (512 aa).

One can recognise a Pyruvate carboxyltransferase domain in the interval I4–A266. 4 residues coordinate Mn(2+): D13, H201, H203, and N237. Positions Q390–I512 are regulatory domain.

This sequence belongs to the alpha-IPM synthase/homocitrate synthase family. LeuA type 1 subfamily. Homodimer. Mn(2+) is required as a cofactor.

The protein localises to the cytoplasm. The catalysed reaction is 3-methyl-2-oxobutanoate + acetyl-CoA + H2O = (2S)-2-isopropylmalate + CoA + H(+). The protein operates within amino-acid biosynthesis; L-leucine biosynthesis; L-leucine from 3-methyl-2-oxobutanoate: step 1/4. In terms of biological role, catalyzes the condensation of the acetyl group of acetyl-CoA with 3-methyl-2-oxobutanoate (2-ketoisovalerate) to form 3-carboxy-3-hydroxy-4-methylpentanoate (2-isopropylmalate). The chain is 2-isopropylmalate synthase from Brevibacillus brevis (strain 47 / JCM 6285 / NBRC 100599).